The primary structure comprises 523 residues: WD repeat-containing protein WDS homolog (523 aa).

The 33-residue stretch at 16-48 (KKHEFIRILVQCLYSLGFKNSASCLEFESKILY) folds into the LisH domain. The CTLH domain maps to 49 to 107 (KTADSEFLEKQVLSGNWDSCVQVLDRIFDNSMDDTRNTALYLVFKQCLLEYLKRGDVSL). WD repeat units follow at residues 222–261 (AHKN…KVEL), 267–306 (SHQN…LRHT), 310–353 (NNTG…KAWR), 355–394 (TRIP…ERVI), 395–434 (SEEQ…KQPL), 438–480 (GHRQ…PLEV), and 483–523 (GHSM…KPLN).

Interacts with RANBPM.

It localises to the cytoplasm. The chain is WD repeat-containing protein WDS homolog from Arabidopsis thaliana (Mouse-ear cress).